We begin with the raw amino-acid sequence, 107 residues long: SH3 domain-binding glutamic acid-rich-like protein 2 (107 aa).

The short motif at glutamine 61–proline 67 is the SH3-binding element.

This sequence belongs to the SH3BGR family. Highly expressed in brain, placenta, liver and kidney. Expressed in retina.

The protein localises to the nucleus. The chain is SH3 domain-binding glutamic acid-rich-like protein 2 (SH3BGRL2) from Homo sapiens (Human).